Here is a 258-residue protein sequence, read N- to C-terminus: Acetylglutamate kinase (258 aa).

Substrate is bound by residues 44 to 45 (GG), Arg-66, and Asn-158. Residues 181–186 (DVSGIL) and 209–211 (IIT) each bind ATP.

It belongs to the acetylglutamate kinase family. ArgB subfamily. Homodimer.

It localises to the cytoplasm. The enzyme catalyses N-acetyl-L-glutamate + ATP = N-acetyl-L-glutamyl 5-phosphate + ADP. The protein operates within amino-acid biosynthesis; L-arginine biosynthesis; N(2)-acetyl-L-ornithine from L-glutamate: step 2/4. Functionally, catalyzes the ATP-dependent phosphorylation of N-acetyl-L-glutamate. The protein is Acetylglutamate kinase of Escherichia coli O157:H7.